Consider the following 348-residue polypeptide: Killer cell immunoglobulin-like receptor 2DL2 (348 aa).

Positions 1 to 21 (MSLMVVSMACVGFFLLQGAWP) are cleaved as a signal peptide. Residues 22–245 (HEGVHRKPSL…SKTGNPRHLH (224 aa)) lie on the Extracellular side of the membrane. 2 Ig-like C2-type domains span residues 42 to 107 (EETV…VTHS) and 142 to 205 (GESV…FRDS). 2 cysteine pairs are disulfide-bonded: cysteine 49–cysteine 100 and cysteine 149–cysteine 198. Residues asparagine 84, asparagine 178, and asparagine 211 are each glycosylated (N-linked (GlcNAc...) asparagine). The helical transmembrane segment at 246–264 (ILIGTSVVIILFILLFFLL) threads the bilayer. The Cytoplasmic portion of the chain corresponds to 265-348 (HRWCSNKKNA…ESRSKVVSCP (84 aa)).

The protein belongs to the immunoglobulin superfamily.

It localises to the cell membrane. Functionally, receptor on natural killer (NK) cells for HLA-Cw1, 3, 7, and 8 allotypes. Inhibits the activity of NK cells thus preventing cell lysis. This chain is Killer cell immunoglobulin-like receptor 2DL2, found in Homo sapiens (Human).